The following is a 296-amino-acid chain: Thymidylate synthase (296 aa).

DUMP contacts are provided by residues arginine 23 and 157-158 (RR). Residue cysteine 177 is the Nucleophile of the active site. DUMP contacts are provided by residues 198–201 (RSAD), asparagine 209, and 239–241 (HIY). A (6R)-5,10-methylene-5,6,7,8-tetrahydrofolate-binding site is contributed by aspartate 201. A (6R)-5,10-methylene-5,6,7,8-tetrahydrofolate-binding site is contributed by alanine 295.

Belongs to the thymidylate synthase family. Bacterial-type ThyA subfamily. In terms of assembly, homodimer.

It localises to the cytoplasm. It carries out the reaction dUMP + (6R)-5,10-methylene-5,6,7,8-tetrahydrofolate = 7,8-dihydrofolate + dTMP. Its pathway is pyrimidine metabolism; dTTP biosynthesis. Its function is as follows. Catalyzes the reductive methylation of 2'-deoxyuridine-5'-monophosphate (dUMP) to 2'-deoxythymidine-5'-monophosphate (dTMP) while utilizing 5,10-methylenetetrahydrofolate (mTHF) as the methyl donor and reductant in the reaction, yielding dihydrofolate (DHF) as a by-product. This enzymatic reaction provides an intracellular de novo source of dTMP, an essential precursor for DNA biosynthesis. The protein is Thymidylate synthase of Zymomonas mobilis subsp. mobilis (strain ATCC 31821 / ZM4 / CP4).